We begin with the raw amino-acid sequence, 2971 residues long: uncharacterized protein (2971 aa).

A disordered region spans residues 929–964 (SANFSNGPEESSLSTRLHIQKKRKAKKQRLETRRQK). Positions 936-945 (PEESSLSTRL) are enriched in polar residues. The segment covering 946 to 955 (HIQKKRKAKK) has biased composition (basic residues).

Its subcellular location is the plastid. It is found in the chloroplast. This is an uncharacterized protein from Chlamydomonas reinhardtii (Chlamydomonas smithii).